A 421-amino-acid chain; its full sequence is MDLETKVKKMGLGHGQGFGAPCLKCKEKCEGFELHFWRKICRNCKCGQEEHDVLLSNEEDRKVGKLFEDTKYTTLIAKLKSDGIPMYKRNVMILTNPVAAKKNISINTVTYEWAPPVQNQALARQYMQMLPKEKQPVAGSEGAQYRKKQLAKQLPAHDQDPSKCHELSPKEVKEMEQFVKKYKNEALGVGDVKLPREMDAQDPNRMCIPGGDRSTTAAVGAKENKLAENKRTQYSCYCCNLSMKEGDPAIYAERAGYDKLWHPACFVCSTCHELLVDMIYFWKNGKLYCGRHYCDSEKPRCAGCDELIFSNEYTQAENQNWHLKHFCCFDCDSILAGEIYVMVNDKPVCKPCYVKNHAVVCQGCHNAIDPEVQRVTYNNFSWHASTECFLCSCCSKCLIGQKFMPVEGMVFCSVECKKMMS.

One can recognise a PET domain in the interval M92–D199. The interval E133–C164 is disordered. Over residues P155–C164 the composition is skewed to basic and acidic residues. LIM zinc-binding domains lie at Y234–E297, P299–V359, and Q362–S421.

The protein belongs to the prickle / espinas / testin family. As to quaternary structure, interacts via LIM domain 1 with ZYX. Interacts (via LIM domain 3) with ENAH and VASP. Interacts with ALKBH4, talin, actin, alpha-actinin, GRIP1 and PXN. Interacts (via LIM domain 2) with ACTL7A (via N-terminus). Heterodimer with ACTL7A; the heterodimer interacts with ENAH to form a heterotrimer.

It is found in the cytoplasm. The protein resides in the cell junction. The protein localises to the focal adhesion. In terms of biological role, scaffold protein that may play a role in cell adhesion, cell spreading and in the reorganization of the actin cytoskeleton. Plays a role in the regulation of cell proliferation. May act as a tumor suppressor. This is Testin (TES) from Equus caballus (Horse).